The sequence spans 328 residues: Extracellular exo-alpha-(1-&gt;5)-L-arabinofuranosidase (328 aa).

Residues 1–43 constitute a signal peptide (tat-tyPE signal); the sequence is MCTREAVRMSREHDLPEIPSRRLLLKGAAAAGALTAVPGVAHA. The active-site Proton acceptor is the D60. E236 acts as the Proton donor in catalysis.

This sequence belongs to the glycosyl hydrolase 43 family. In terms of processing, predicted to be exported by the Tat system. The position of the signal peptide cleavage has been experimentally proven.

The protein resides in the secreted. It catalyses the reaction Hydrolysis of terminal non-reducing alpha-L-arabinofuranoside residues in alpha-L-arabinosides.. Its pathway is glycan metabolism; L-arabinan degradation. Functionally, involved in the degradation of arabinan and is a key enzyme in the complete degradation of the plant cell wall. Catalyzes only the cleavage of terminal alpha-(1-&gt;5) arabinofuranosyl bonds of arabinan present in the arabinofuranosyl polysaccharides or oligosaccharides. It cannot act on other arabinose-containing polysaccharides and arabinoxylo-oligosaccharides. This is Extracellular exo-alpha-(1-&gt;5)-L-arabinofuranosidase from Streptomyces chartreusis.